A 208-amino-acid polypeptide reads, in one-letter code: Small ribosomal subunit protein uS4 (208 aa).

Positions Arg-98 to Ala-158 constitute an S4 RNA-binding domain.

This sequence belongs to the universal ribosomal protein uS4 family. Part of the 30S ribosomal subunit. Contacts protein S5. The interaction surface between S4 and S5 is involved in control of translational fidelity.

Functionally, one of the primary rRNA binding proteins, it binds directly to 16S rRNA where it nucleates assembly of the body of the 30S subunit. With S5 and S12 plays an important role in translational accuracy. The sequence is that of Small ribosomal subunit protein uS4 from Lawsonia intracellularis (strain PHE/MN1-00).